The sequence spans 273 residues: 2,3,4,5-tetrahydropyridine-2,6-dicarboxylate N-succinyltransferase (273 aa).

It belongs to the transferase hexapeptide repeat family.

Its subcellular location is the cytoplasm. It carries out the reaction (S)-2,3,4,5-tetrahydrodipicolinate + succinyl-CoA + H2O = (S)-2-succinylamino-6-oxoheptanedioate + CoA. It functions in the pathway amino-acid biosynthesis; L-lysine biosynthesis via DAP pathway; LL-2,6-diaminopimelate from (S)-tetrahydrodipicolinate (succinylase route): step 1/3. The chain is 2,3,4,5-tetrahydropyridine-2,6-dicarboxylate N-succinyltransferase from Acinetobacter baumannii (strain AB307-0294).